The following is a 319-amino-acid chain: tRNA-cytidine(32) 2-sulfurtransferase (319 aa).

A PP-loop motif motif is present at residues 43 to 48 (SGGKDS). Residues C118, C121, and C209 each contribute to the [4Fe-4S] cluster site. Positions 272 to 297 (DLAFDSEKMPERFSDGSEEDESEIKI) are disordered. The segment covering 276-286 (DSEKMPERFSD) has biased composition (basic and acidic residues).

The protein belongs to the TtcA family. In terms of assembly, homodimer. Requires Mg(2+) as cofactor. It depends on [4Fe-4S] cluster as a cofactor.

The protein resides in the cytoplasm. It catalyses the reaction cytidine(32) in tRNA + S-sulfanyl-L-cysteinyl-[cysteine desulfurase] + AH2 + ATP = 2-thiocytidine(32) in tRNA + L-cysteinyl-[cysteine desulfurase] + A + AMP + diphosphate + H(+). Its pathway is tRNA modification. Catalyzes the ATP-dependent 2-thiolation of cytidine in position 32 of tRNA, to form 2-thiocytidine (s(2)C32). The sulfur atoms are provided by the cysteine/cysteine desulfurase (IscS) system. In Neisseria gonorrhoeae (strain ATCC 700825 / FA 1090), this protein is tRNA-cytidine(32) 2-sulfurtransferase.